The chain runs to 502 residues: UDP-N-acetylmuramoylalanine--D-glutamate ligase (502 aa).

136 to 142 (GTNGKTT) is a binding site for ATP.

This sequence belongs to the MurCDEF family.

The protein resides in the cytoplasm. The enzyme catalyses UDP-N-acetyl-alpha-D-muramoyl-L-alanine + D-glutamate + ATP = UDP-N-acetyl-alpha-D-muramoyl-L-alanyl-D-glutamate + ADP + phosphate + H(+). It functions in the pathway cell wall biogenesis; peptidoglycan biosynthesis. Functionally, cell wall formation. Catalyzes the addition of glutamate to the nucleotide precursor UDP-N-acetylmuramoyl-L-alanine (UMA). This Corynebacterium jeikeium (strain K411) protein is UDP-N-acetylmuramoylalanine--D-glutamate ligase.